A 508-amino-acid polypeptide reads, in one-letter code: Histidine ammonia-lyase (508 aa).

The segment at residues 143–145 is a cross-link (5-imidazolinone (Ala-Gly)); that stretch reads ASG. S144 is subject to 2,3-didehydroalanine (Ser).

Belongs to the PAL/histidase family. Contains an active site 4-methylidene-imidazol-5-one (MIO), which is formed autocatalytically by cyclization and dehydration of residues Ala-Ser-Gly.

The protein resides in the cytoplasm. It carries out the reaction L-histidine = trans-urocanate + NH4(+). It functions in the pathway amino-acid degradation; L-histidine degradation into L-glutamate; N-formimidoyl-L-glutamate from L-histidine: step 1/3. The polypeptide is Histidine ammonia-lyase (Caldanaerobacter subterraneus subsp. tengcongensis (strain DSM 15242 / JCM 11007 / NBRC 100824 / MB4) (Thermoanaerobacter tengcongensis)).